Consider the following 446-residue polypeptide: D(3) dopamine receptor (446 aa).

Residues 1–32 (MAPLSQISSHINSTCGAENSTGVNRARPHAYY) are Extracellular-facing. Residues N12 and N19 are each glycosylated (N-linked (GlcNAc...) asparagine). The helical transmembrane segment at 33–55 (ALSYCALILAIIFGNGLVCAAVL) threads the bilayer. Topologically, residues 56 to 65 (RERALQTTTN) are cytoplasmic. Residues 66-88 (YLVVSLAVADLLVATLVMPWVVY) traverse the membrane as a helical segment. Residues 89–104 (LEVTGGVWNFSRICCD) lie on the Extracellular side of the membrane. N-linked (GlcNAc...) asparagine glycosylation occurs at N97. A disulfide bond links C103 and C181. The chain crosses the membrane as a helical span at residues 105-126 (VFVTLDVMMCTASILNLCAISI). Over 127 to 149 (DRYTAVVMPVHYQHGTGQSSCRR) the chain is Cytoplasmic. Residues 150 to 170 (VALMITAVWVLAFAVSCPLLF) form a helical membrane-spanning segment. Over 171-187 (GFNTTGDPSICSISNPD) the chain is Extracellular. An N-linked (GlcNAc...) asparagine glycan is attached at N173. A helical membrane pass occupies residues 188-209 (FVIYSSVVSFYVPFGVTVLVYA). The Cytoplasmic portion of the chain corresponds to 210–375 (RIYMVLRQRR…VPLREKKATQ (166 aa)). Residues 376 to 397 (MVVIVLGAFIVCWLPFFLTHVL) form a helical membrane-spanning segment. The Extracellular portion of the chain corresponds to 398–412 (NTHCQACHVSPELYR). A disulfide bond links C401 and C404. A helical transmembrane segment spans residues 413 to 432 (ATTWLGYVNSALNPVIYTTF). Residues 433 to 446 (NIEFRKAFLKILSC) lie on the Cytoplasmic side of the membrane.

Belongs to the G-protein coupled receptor 1 family. Interacts with CLIC6. Interacts with GRK4. Interacts with PALM. Interacts with FLNA (via filamin repeat 21); increases PKA-mediated phosphorylation of FLNA. In terms of processing, phosphorylated by GRK4. Post-translationally, palmitoylated.

The protein resides in the cell membrane. In terms of biological role, dopamine receptor whose activity is mediated by G proteins which inhibit adenylyl cyclase. Promotes cell proliferation. The polypeptide is D(3) dopamine receptor (Drd3) (Mus musculus (Mouse)).